Reading from the N-terminus, the 371-residue chain is Putrescine N-methyltransferase 2 (371 aa).

2 stretches are compositionally biased toward polar residues: residues 1–14 and 23–70; these read MEVI…STIF and GHQN…HDNG. Residues 1–70 form a disordered region; that stretch reads MEVISTNTNG…QNGTISHDNG (70 aa). A PABS domain is found at 82 to 319; sequence PGWFSEFSAL…GVIGYMLCST (238 aa). Residues Gln113, Glu188, and 219–220 each bind S-adenosyl-L-methionine; that span reads DG. Catalysis depends on Asp238, which acts as the Proton acceptor. Position 307 (Tyr307) interacts with S-adenosyl-L-methionine.

It belongs to the class I-like SAM-binding methyltransferase superfamily. Spermidine/spermine synthase family. Mainly expressed in roots.

It catalyses the reaction putrescine + S-adenosyl-L-methionine = N-methylputrescine + S-adenosyl-L-homocysteine + H(+). The protein operates within alkaloid biosynthesis; nicotine biosynthesis. In terms of biological role, involved in the biosynthesis of pyridine alkaloid natural products, leading mainly to the production of anabasine, anatabine, nicotine and nornicotine, effective deterrents against herbivores with antiparasitic and pesticide properties (neurotoxins); nornicotine serves as the precursor in the synthesis of the carcinogen compound N'-nitrosonornicotine (NNN). Methyltransferase that mediates the conversion of putrescine to N-methylputrescine. The polypeptide is Putrescine N-methyltransferase 2 (Nicotiana attenuata (Coyote tobacco)).